A 163-amino-acid polypeptide reads, in one-letter code: Transcription elongation factor GreA (163 aa).

Residues 49–80 (ENAEYDAARDRQSEVERRILELERILENAEII) are a coiled coil.

Belongs to the GreA/GreB family.

Necessary for efficient RNA polymerase transcription elongation past template-encoded arresting sites. The arresting sites in DNA have the property of trapping a certain fraction of elongating RNA polymerases that pass through, resulting in locked ternary complexes. Cleavage of the nascent transcript by cleavage factors such as GreA or GreB allows the resumption of elongation from the new 3'terminus. GreA releases sequences of 2 to 3 nucleotides. The polypeptide is Transcription elongation factor GreA (Mycoplasmopsis agalactiae (strain NCTC 10123 / CIP 59.7 / PG2) (Mycoplasma agalactiae)).